The following is a 756-amino-acid chain: MFLLLVLLTGLGGMHADLNPHKTFLQTTIPEKISSSDAKTDPEHNVVYMITIEGKPYFVHLKKQSILSSASFIHSYDKNDIRHSKPLLVQMDCNYNGYVAGIPNSLVTLSVCSGLRGTMQLKNISYGIEPMEAVSGFIHKIYEEKFADTNILLEENDTYSWFNSEYQVRKSSEKTDFIKLFPRYIEMHIVVDKNLFDYMGSDINAVTQKVIQIIGLVNTMLTQLQLTVIISSIEIWSNKNKISTTGHAEYVLLEFFEWKKDHLNFKPHQIAYLFVYRKLPTLIGATFPGQVCNKDFAAAVALYPEGLSLESYTVIIVQLLGLNLGLTYDKTDTCHCSGDVCTMTPKAVYSGGVKDFSVCSLDDFKYISSHNGLTCLQTNPLEMPTYTQRRICGNGLLEGGEECDCGNKDNCTHKLCCDALTCRLKDNAQCGSGDCCSKDCKFKPANTICRKSVDVECDFTEFCNGSYPYCLLDTYVRDGEYCDSGGAFCFQGRCRTFDKQCDDLIGRGSRGAPIFCYDEINTRGDKFGNCGTEYCLFQHILCGKLVCTWEHKDLISRPNLSVIYAHVRDQTCVSTYLPSRKPPPVASTVSKTSYYSVDDRDETFVQDGSVCGPDMYCFKMRCKHVRFLMDFETCEASIECSGHGICNNFNHCHCEKGYNPPHCKPKKEAFGSTDDGHLVPAEKSYMEEGRHAPFQKQRFQLIFYISLPVLIITTAILIKRKKLRELCYRGETESESSVSQESSSNSKSSLSESTSL.

The first 16 residues, M1–A16, serve as a signal peptide directing secretion. Positions D17–Y142 are excised as a propeptide. The Extracellular portion of the chain corresponds to D17–R698. The region spanning R183 to P380 is the Peptidase M12B domain. Disulfide bonds link C292-C375, C334-C359, C336-C341, and C449-C470. The Disintegrin domain occupies R389–D478. N559 carries an N-linked (GlcNAc...) asparagine glycan. Residues D630 to K664 enclose the EGF-like domain. 3 disulfides stabilise this stretch: C634–C646, C640–C652, and C654–C663. Residues F699–K719 form a helical membrane-spanning segment. Residues R720–L756 lie on the Cytoplasmic side of the membrane. Residues E731 to L756 form a disordered region. Positions E735–L756 are enriched in low complexity.

As to quaternary structure, interacts with TEX101. Post-translationally, subject to proteolytic processing during epididymal transit of spermatozoa. Detected in testis (at protein level). Detected in adult and prepubertal testis. Detected at very low levels in heart, kidney, brain, muscle ovary and uterus.

The protein localises to the membrane. Functionally, this is a non catalytic metalloprotease-like protein. May play a role in sperm-egg fusion. The protein is Disintegrin and metalloproteinase domain-containing protein 5 (ADAM5) of Macaca fascicularis (Crab-eating macaque).